The primary structure comprises 488 residues: Bifunctional protein GlmU (488 aa).

The segment at 1-237 (MPRTRTPLAA…VEEASGVNDR (237 aa)) is pyrophosphorylase. UDP-N-acetyl-alpha-D-glucosamine is bound by residues 13–16 (LAAG), Lys27, Gln82, 87–88 (GT), 110–112 (SGD), Gly149, Glu164, Asn179, and Asn235. Asp112 provides a ligand contact to Mg(2+). Asn235 is a Mg(2+) binding site. The linker stretch occupies residues 238-258 (VELSRANRVMVGRLAEAFMRA). Positions 259–488 (GVTIEDPARF…KGRPAARRAS (230 aa)) are N-acetyltransferase. 2 residues coordinate UDP-N-acetyl-alpha-D-glucosamine: Arg341 and Lys359. His371 functions as the Proton acceptor in the catalytic mechanism. UDP-N-acetyl-alpha-D-glucosamine is bound by residues Tyr374 and Asn385. Residues Ala388, 394–395 (NY), Ser413, Ala431, and Arg448 contribute to the acetyl-CoA site. Residues 459-488 (AQRQAEKQMKGTATGPASARKGRPAARRAS) form a disordered region. Residues 478–488 (RKGRPAARRAS) are compositionally biased toward basic residues.

In the N-terminal section; belongs to the N-acetylglucosamine-1-phosphate uridyltransferase family. This sequence in the C-terminal section; belongs to the transferase hexapeptide repeat family. Homotrimer. It depends on Mg(2+) as a cofactor.

The protein localises to the cytoplasm. It carries out the reaction alpha-D-glucosamine 1-phosphate + acetyl-CoA = N-acetyl-alpha-D-glucosamine 1-phosphate + CoA + H(+). It catalyses the reaction N-acetyl-alpha-D-glucosamine 1-phosphate + UTP + H(+) = UDP-N-acetyl-alpha-D-glucosamine + diphosphate. The protein operates within nucleotide-sugar biosynthesis; UDP-N-acetyl-alpha-D-glucosamine biosynthesis; N-acetyl-alpha-D-glucosamine 1-phosphate from alpha-D-glucosamine 6-phosphate (route II): step 2/2. It participates in nucleotide-sugar biosynthesis; UDP-N-acetyl-alpha-D-glucosamine biosynthesis; UDP-N-acetyl-alpha-D-glucosamine from N-acetyl-alpha-D-glucosamine 1-phosphate: step 1/1. It functions in the pathway bacterial outer membrane biogenesis; LPS lipid A biosynthesis. Its function is as follows. Catalyzes the last two sequential reactions in the de novo biosynthetic pathway for UDP-N-acetylglucosamine (UDP-GlcNAc). The C-terminal domain catalyzes the transfer of acetyl group from acetyl coenzyme A to glucosamine-1-phosphate (GlcN-1-P) to produce N-acetylglucosamine-1-phosphate (GlcNAc-1-P), which is converted into UDP-GlcNAc by the transfer of uridine 5-monophosphate (from uridine 5-triphosphate), a reaction catalyzed by the N-terminal domain. The protein is Bifunctional protein GlmU of Anaeromyxobacter sp. (strain K).